Here is a 336-residue protein sequence, read N- to C-terminus: Glyceraldehyde-3-phosphate dehydrogenase (336 aa).

Residues 12-13 (RI), Asp-34, Arg-78, and Thr-121 each bind NAD(+). D-glyceraldehyde 3-phosphate is bound by residues 151 to 153 (SCT), Thr-182, Arg-199, 212 to 213 (TG), and Arg-235. Cys-152 serves as the catalytic Nucleophile. Asn-316 provides a ligand contact to NAD(+).

It belongs to the glyceraldehyde-3-phosphate dehydrogenase family. In terms of assembly, homotetramer.

Its subcellular location is the cytoplasm. It carries out the reaction D-glyceraldehyde 3-phosphate + phosphate + NAD(+) = (2R)-3-phospho-glyceroyl phosphate + NADH + H(+). It functions in the pathway carbohydrate degradation; glycolysis; pyruvate from D-glyceraldehyde 3-phosphate: step 1/5. Functionally, also binds human plasminogen. In terms of biological role, catalyzes the oxidative phosphorylation of glyceraldehyde 3-phosphate (G3P) to 1,3-bisphosphoglycerate (BPG) using the cofactor NAD. The first reaction step involves the formation of a hemiacetal intermediate between G3P and a cysteine residue, and this hemiacetal intermediate is then oxidized to a thioester, with concomitant reduction of NAD to NADH. The reduced NADH is then exchanged with the second NAD, and the thioester is attacked by a nucleophilic inorganic phosphate to produce BPG. In Streptococcus pyogenes, this protein is Glyceraldehyde-3-phosphate dehydrogenase (gap).